Consider the following 367-residue polypeptide: Tetraacyldisaccharide 4'-kinase (367 aa).

Position 68 to 75 (68 to 75 (VLGGSGKT)) interacts with ATP.

The protein belongs to the LpxK family.

It catalyses the reaction a lipid A disaccharide + ATP = a lipid IVA + ADP + H(+). Its pathway is glycolipid biosynthesis; lipid IV(A) biosynthesis; lipid IV(A) from (3R)-3-hydroxytetradecanoyl-[acyl-carrier-protein] and UDP-N-acetyl-alpha-D-glucosamine: step 6/6. In terms of biological role, transfers the gamma-phosphate of ATP to the 4'-position of a tetraacyldisaccharide 1-phosphate intermediate (termed DS-1-P) to form tetraacyldisaccharide 1,4'-bis-phosphate (lipid IVA). This Chlamydia abortus (strain DSM 27085 / S26/3) (Chlamydophila abortus) protein is Tetraacyldisaccharide 4'-kinase.